Reading from the N-terminus, the 326-residue chain is Polycomb complex protein BMI-1 (326 aa).

The RING-type zinc finger occupies 18 to 57; it reads CVLCGGYFIDATTIIECLHSFCKTCIVRYLETSKYCPICD. The Nuclear localization signal signature appears at 81–95; sequence KLVPGLFKNEMKRRR. The interaction with PHC2 stretch occupies residues 162–182; the sequence is RYLRCPAAMTVMHLRKFLRSK. Positions 164 to 228 are interaction with E4F1; it reads LRCPAAMTVM…GPLPLKYRVR (65 aa). Residues 236–326 form a disordered region; sequence ISHQRDGLTN…VNGSSATSSG (91 aa). Residues 266-278 show a composition bias toward low complexity; it reads PSTSSCLPSPSTP. The span at 279 to 309 shows a compositional bias: polar residues; it reads VQSPHPQFPHISSTMNGTSNSPSGNHQSSFA. Over residues 315-326 the composition is skewed to low complexity; sequence SSVNGSSATSSG.

In terms of assembly, component of a PRC1-like complex. Identified in a PRC1-like HPRC-H complex with CBX2, CBX4, CBX8, PHC1, PHC2, PHC3 RING1 and RNF2. Interacts with RNF2/RING2. Interacts with RING1. Part of a complex that contains RNF2, UB2D3 and BMI1, where RNF2 and BMI1 form a tight heterodimer, and UB2D3 interacts only with RNF2. The complex composed of RNF2, UB2D3 and BMI1 binds nucleosomes, and has activity only with nucleosomal histone H2A. Interacts with CBX7 and CBX8. Interacts with SPOP. Part of a complex consisting of BMI1, CUL3 and SPOP. Interacts with E4F1. Interacts with PHC2. Interacts with zinc finger protein ZNF277. May be part of a complex including at least ZNF277, BMI1 and RNF2/RING2. Post-translationally, monoubiquitinated. May be polyubiquitinated; which does not lead to proteasomal degradation.

Its subcellular location is the nucleus. The protein localises to the cytoplasm. Component of a Polycomb group (PcG) multiprotein PRC1-like complex, a complex class required to maintain the transcriptionally repressive state of many genes, including Hox genes, throughout development. PcG PRC1 complex acts via chromatin remodeling and modification of histones; it mediates monoubiquitination of histone H2A 'Lys-119', rendering chromatin heritably changed in its expressibility. The complex composed of RNF2, UB2D3 and BMI1 binds nucleosomes, and has activity only with nucleosomal histone H2A. In the PRC1-like complex, regulates the E3 ubiquitin-protein ligase activity of RNF2/RING2. The sequence is that of Polycomb complex protein BMI-1 (BMI1) from Homo sapiens (Human).